A 173-amino-acid polypeptide reads, in one-letter code: Bifunctional protein PyrR (173 aa).

A PRPP-binding motif is present at residues 93-105 (IILVDDVLYTGRT).

It belongs to the purine/pyrimidine phosphoribosyltransferase family. PyrR subfamily. Homodimer and homohexamer; in equilibrium.

The enzyme catalyses UMP + diphosphate = 5-phospho-alpha-D-ribose 1-diphosphate + uracil. In terms of biological role, regulates transcriptional attenuation of the pyrimidine nucleotide (pyr) operon by binding in a uridine-dependent manner to specific sites on pyr mRNA. This disrupts an antiterminator hairpin in the RNA and favors formation of a downstream transcription terminator, leading to a reduced expression of downstream genes. Also displays a weak uracil phosphoribosyltransferase activity which is not physiologically significant. The sequence is that of Bifunctional protein PyrR from Streptococcus equi subsp. zooepidemicus (strain MGCS10565).